The sequence spans 325 residues: Tetraacyldisaccharide 4'-kinase (325 aa).

An ATP-binding site is contributed by 55–62 (TAGGNGKT).

The protein belongs to the LpxK family.

It carries out the reaction a lipid A disaccharide + ATP = a lipid IVA + ADP + H(+). It functions in the pathway glycolipid biosynthesis; lipid IV(A) biosynthesis; lipid IV(A) from (3R)-3-hydroxytetradecanoyl-[acyl-carrier-protein] and UDP-N-acetyl-alpha-D-glucosamine: step 6/6. Functionally, transfers the gamma-phosphate of ATP to the 4'-position of a tetraacyldisaccharide 1-phosphate intermediate (termed DS-1-P) to form tetraacyldisaccharide 1,4'-bis-phosphate (lipid IVA). In Salmonella dublin (strain CT_02021853), this protein is Tetraacyldisaccharide 4'-kinase.